The following is a 596-amino-acid chain: Arginine--tRNA ligase (596 aa).

The 'HIGH' region signature appears at 139–149 (ANPTGPLHVGH).

The protein belongs to the class-I aminoacyl-tRNA synthetase family. In terms of assembly, monomer.

It is found in the cytoplasm. It carries out the reaction tRNA(Arg) + L-arginine + ATP = L-arginyl-tRNA(Arg) + AMP + diphosphate. This is Arginine--tRNA ligase from Paraburkholderia phytofirmans (strain DSM 17436 / LMG 22146 / PsJN) (Burkholderia phytofirmans).